The following is a 279-amino-acid chain: Putative pyruvate, phosphate dikinase regulatory protein (279 aa).

Gly-157–Thr-164 contacts ADP.

The protein belongs to the pyruvate, phosphate/water dikinase regulatory protein family. PDRP subfamily.

It catalyses the reaction N(tele)-phospho-L-histidyl/L-threonyl-[pyruvate, phosphate dikinase] + ADP = N(tele)-phospho-L-histidyl/O-phospho-L-threonyl-[pyruvate, phosphate dikinase] + AMP + H(+). It carries out the reaction N(tele)-phospho-L-histidyl/O-phospho-L-threonyl-[pyruvate, phosphate dikinase] + phosphate + H(+) = N(tele)-phospho-L-histidyl/L-threonyl-[pyruvate, phosphate dikinase] + diphosphate. Bifunctional serine/threonine kinase and phosphorylase involved in the regulation of the pyruvate, phosphate dikinase (PPDK) by catalyzing its phosphorylation/dephosphorylation. The protein is Putative pyruvate, phosphate dikinase regulatory protein of Lactobacillus helveticus (strain DPC 4571).